The following is a 106-amino-acid chain: RNA-binding protein Hfq (106 aa).

The Sm domain occupies 9 to 68; sequence DPYLNALRKERVPVSIYLVNGIKLQGQIESFDAFVILLRNNISQMVYKHAVSTIVPSRNI. Residues 78 to 106 form a disordered region; that stretch reads EDEAGEEISAEYTPNAEGQAEATADPLYD.

The protein belongs to the Hfq family. In terms of assembly, homohexamer.

In terms of biological role, RNA chaperone that binds small regulatory RNA (sRNAs) and mRNAs to facilitate mRNA translational regulation in response to envelope stress, environmental stress and changes in metabolite concentrations. Also binds with high specificity to tRNAs. The polypeptide is RNA-binding protein Hfq (Dichelobacter nodosus (strain VCS1703A)).